The primary structure comprises 1362 residues: Leptomycin B resistance protein pmd1 (1362 aa).

Residues 1-45 (MSLHSKKSTSTVKDNEHSLDLSIKSIPSNEKNFSTEKSENEASES) are disordered. Residues 1-91 (MSLHSKKSTS…RILSYADKWD (91 aa)) are Cytoplasmic-facing. A compositionally biased stretch (basic and acidic residues) spans 33 to 45 (FSTEKSENEASES). Transmembrane regions (helical) follow at residues 92-115 (IMLQ…MSLV), 138-162 (TVDH…IYTV), 220-237 (LVFF…IAFI), 244-264 (LILS…VPFI), 320-346 (AIAM…WEGG), and 354-374 (LDVS…YSLA). Positions 95–385 (QLAGTITGIG…ISPKMQSFVS (291 aa)) constitute an ABC transmembrane type-1 1 domain. Over 375-788 (NISPKMQSFV…LWFIHSFVRT (414 aa)) the chain is Cytoplasmic. The region spanning 420–665 (IELKNIRFVY…NGAYARLVEA (246 aa)) is the ABC transporter 1 domain. 455–462 (GASGSGKS) provides a ligand contact to ATP. Residues 748 to 768 (LPPADVGELNEEPKKSKKSKK) are disordered. The next 6 helical transmembrane spans lie at 789 to 809 (MIEI…GAAY), 835 to 859 (VNVF…SNFA), 916 to 935 (LGTF…LSLA), 940 to 957 (LGLV…AGYY), 1022 to 1040 (GLFF…ALTF), and 1054 to 1072 (IVQF…QQAG). The 289-residue stretch at 795–1083 (LLIGILASMI…FFGYSADVTK (289 aa)) folds into the ABC transmembrane type-1 2 domain. Residues 1073–1362 (QFFGYSADVT…LVVEQGLNKA (290 aa)) lie on the Cytoplasmic side of the membrane. The region spanning 1119–1356 (IEFRQVEFSY…RGRYYELVVE (238 aa)) is the ABC transporter 2 domain. 1154 to 1161 (GSSGCGKS) is a binding site for ATP.

It belongs to the ABC transporter superfamily. ABCB family. Multidrug resistance exporter (TC 3.A.1.201) subfamily.

The protein resides in the membrane. In terms of biological role, may be a transmembrane transporter of the mating factor, namely P-factor or M-factor. Confers resistance to leptomycin B and to several other antifungal drugs. The protein is Leptomycin B resistance protein pmd1 (pmd1) of Schizosaccharomyces pombe (strain 972 / ATCC 24843) (Fission yeast).